Reading from the N-terminus, the 914-residue chain is Inter-alpha-trypsin inhibitor heavy chain H1 (914 aa).

An N-terminal signal peptide occupies residues M1–G30. The propeptide occupies L31 to R36. Positions A39–E168 constitute a VIT domain. Residue C62 is glycosylated (S-linked (Hex...) cysteine). S131 carries the post-translational modification Phosphoserine. 2 N-linked (GlcNAc...) asparagine glycosylation sites follow: N288 and N291. One can recognise a VWFA domain in the interval S293 to E453. Phosphothreonine occurs at positions 405 and 410. The N-linked (GlcNAc...) asparagine glycan is linked to N591. An O-linked (GalNAc...) threonine glycan is attached at T656. D675 carries the aspartate 1-(chondroitin 4-sulfate)-ester modification. Residues P676–F914 constitute a propeptide that is removed on maturation.

The protein belongs to the ITIH family. In terms of assembly, I-alpha-I plasma protease inhibitors are assembled from one or two heavy chains (HC) and one light chain, bikunin. Inter-alpha-inhibitor (I-alpha-I) is composed of ITIH1/HC1, ITIH2/HC2 and bikunin. Interacts with TNFAIP6 (via Link and CUB domains). Heavy chains are linked to bikunin via chondroitin 4-sulfate esterified to the alpha-carboxyl of the C-terminal aspartate after propeptide cleavage. Post-translationally, the S-linked glycan is composed of two 6-carbon sugars, possibly Glc or Gal.

The protein resides in the secreted. Its function is as follows. May act as a carrier of hyaluronan in serum or as a binding protein between hyaluronan and other matrix protein, including those on cell surfaces in tissues to regulate the localization, synthesis and degradation of hyaluronan which are essential to cells undergoing biological processes. The protein is Inter-alpha-trypsin inhibitor heavy chain H1 (ITIH1) of Mesocricetus auratus (Golden hamster).